We begin with the raw amino-acid sequence, 166 residues long: Orotate phosphoribosyltransferase (166 aa).

Residues R83, K84, H89, and 109-117 each bind 5-phospho-alpha-D-ribose 1-diphosphate; that span reads DDVATTGGS. Orotate-binding residues include T113 and R141.

The protein belongs to the purine/pyrimidine phosphoribosyltransferase family. PyrE subfamily. As to quaternary structure, homodimer. The cofactor is Mg(2+).

It catalyses the reaction orotidine 5'-phosphate + diphosphate = orotate + 5-phospho-alpha-D-ribose 1-diphosphate. It functions in the pathway pyrimidine metabolism; UMP biosynthesis via de novo pathway; UMP from orotate: step 1/2. In terms of biological role, catalyzes the transfer of a ribosyl phosphate group from 5-phosphoribose 1-diphosphate to orotate, leading to the formation of orotidine monophosphate (OMP). This chain is Orotate phosphoribosyltransferase, found in Picrophilus torridus (strain ATCC 700027 / DSM 9790 / JCM 10055 / NBRC 100828 / KAW 2/3).